The chain runs to 89 residues: Small ribosomal subunit protein uS15 (89 aa).

The protein belongs to the universal ribosomal protein uS15 family. As to quaternary structure, part of the 30S ribosomal subunit. Forms a bridge to the 50S subunit in the 70S ribosome, contacting the 23S rRNA.

Its function is as follows. One of the primary rRNA binding proteins, it binds directly to 16S rRNA where it helps nucleate assembly of the platform of the 30S subunit by binding and bridging several RNA helices of the 16S rRNA. In terms of biological role, forms an intersubunit bridge (bridge B4) with the 23S rRNA of the 50S subunit in the ribosome. In Shouchella clausii (strain KSM-K16) (Alkalihalobacillus clausii), this protein is Small ribosomal subunit protein uS15.